Consider the following 813-residue polypeptide: Tax1-binding protein 1 homolog (813 aa).

Phosphoserine is present on residues S124, S138, and S225. Residues 144–596 (TTKAGLLELK…SYSLQLAEKD (453 aa)) adopt a coiled-coil conformation. Positions 320-420 (EEIGKLQSCL…ELQLHAVKTD (101 aa)) are oligomerization. S618 carries the post-translational modification Phosphoserine; by IKKA. A Phosphoserine modification is found at S631. The tract at residues 667-732 (AHETRDGADG…NVPIPPDPAN (66 aa)) is disordered. A Phosphoserine; by IKKA modification is found at S692. 2 consecutive UBZ1-type zinc fingers follow at residues 751-777 (HKKC…VESH) and 778-804 (WKVC…VQTH). The Zn(2+) site is built by C754, C757, H773, H777, C781, C784, H800, and H804.

Homooligomer. Interacts with TNFAIP3. Interacts with STARD13. Interacts with MYO6. Interacts with TOM1; the interaction is indirect and is mediated by MYO6, which acts as a bridge between TOM1 and TAX1BP1. Interacts with MAVS; this interaction induces MAVS polyubiquitination. Interacts with TNIP1. Interacts with TRAF6; this interaction mediates deubiquitination of TRAF6 and inhibition of NF-kappa-B activation. Interacts with RIPK1; this interaction negatively regulates RIPK1 ubiquitination. Interacts with NBR1. Interacts with TBK1. Interacts with RB1CC1. Interacts with SQSTM1. Interacts with AZI2. Interacts with TICAM1 and TRIM32; these interactions target TICAM1 to TAX1BP1-mediated selective autophagic degradation. Post-translationally, phosphorylated in the C-terminal region by CHUK/IKKA leading to NF-kappa-B signaling down-regulation.

Its subcellular location is the cytoplasm. It is found in the mitochondrion. It localises to the preautophagosomal structure. The protein localises to the cytoplasmic vesicle. The protein resides in the autophagosome. Functionally, ubiquitin-binding adapter that participates in inflammatory, antiviral and innate immune processes as well as selective autophagy regulation. Plays a key role in the negative regulation of NF-kappa-B and IRF3 signalings by acting as an adapter for the ubiquitin-editing enzyme A20/TNFAIP3 to bind and inactivate its substrates. Disrupts the interactions between the E3 ubiquitin ligase TRAF3 and TBK1/IKBKE to attenuate 'Lys63'-linked polyubiquitination of TBK1 and thereby IFN-beta production. Also recruits A20/TNFAIP3 to ubiquitinated signaling proteins TRAF6 and RIPK1, leading to their deubiquitination and disruption of IL-1 and TNF-induced NF-kappa-B signaling pathways. Inhibits virus-induced apoptosis by inducing the 'Lys-48'-linked polyubiquitination and degradation of MAVS via recruitment of the E3 ligase ITCH, thereby attenuating MAVS-mediated apoptosis signaling. As a macroautophagy/autophagy receptor, facilitates the xenophagic clearance of pathogenic bacteria such as Salmonella typhimurium and Mycobacterium tuberculosis. Upon NBR1 recruitment to the SQSTM1-ubiquitin condensates, acts as the major recruiter of RB1CC1 to these ubiquitin condensates to promote their autophagic degradation. Mediates the autophagic degradation of other substrates including TICAM1. This Rattus norvegicus (Rat) protein is Tax1-binding protein 1 homolog (Tax1bp1).